We begin with the raw amino-acid sequence, 502 residues long: Sodium/proline symporter (502 aa).

The Periplasmic segment spans residues 1 to 5 (MAIST). The helical transmembrane segment at 6–26 (PMLVTFCVYIFGMILIGFIAW) threads the bilayer. At 27–41 (RSTKNFDDYILGGRS) the chain is on the cytoplasmic side. 2 hydrophilic regions span residues 27 to 66 (RSTK…GLPG) and 88 to 124 (INWK…KSRI). Residues 42–62 (LGPFVTALSAGASDMSGWLLM) form a helical membrane-spanning segment. Topologically, residues 63–67 (GLPGA) are periplasmic. A helical transmembrane segment spans residues 68–88 (VFLSGISESWIAIGLTLGAWI). The Cytoplasmic portion of the chain corresponds to 89–126 (NWKLVAGRLRVHTEYNNNALTLPDYFTGRFEDKSRILR). A helical membrane pass occupies residues 127–147 (IISALVILLFFTIYCASGIVA). Residues 148–162 (GARLFESTFGMSYET) are Periplasmic-facing. Residues 151 to 162 (LFESTFGMSYET) are hydrophilic. Residues 163-183 (ALWAGAAATILYTFIGGFLAV) traverse the membrane as a helical segment. The Cytoplasmic segment spans residues 184–192 (SWTDTVQAS). Residues 185–189 (WTDTV) are hydrophilic. A helical membrane pass occupies residues 193-213 (LMIFALILTPVIVIISVGGFG). 3 hydrophilic regions span residues 214–231 (DSLE…DMLK), 249–274 (FGQP…RRIS), and 296–319 (FNDH…ELAQ). Topologically, residues 214–234 (DSLEVIKQKSIENVDMLKGLN) are periplasmic. The chain crosses the membrane as a helical span at residues 235-255 (FVAIISLMGWGLGYFGQPHIL). The Cytoplasmic segment spans residues 256 to 275 (ARFMAADSHHSIVHARRISM). A helical transmembrane segment spans residues 276–296 (TWMILCLAGAVAVGFFGIAYF). At 297 to 319 (NDHPALAGAVNQNAERVFIELAQ) the chain is on the periplasmic side. A helical membrane pass occupies residues 320–340 (ILFNPWIAGILLSAILAAVMS). The Cytoplasmic segment spans residues 341–370 (TLSCQLLVCSSAITEDLYKAFLRKHASQKE). The interval 341 to 370 (TLSCQLLVCSSAITEDLYKAFLRKHASQKE) is hydrophilic. The helical transmembrane segment at 371-391 (LVWVGRVMVLVVALVAIALAA) threads the bilayer. Residues 392–397 (NPENRV) lie on the Periplasmic side of the membrane. The tract at residues 392–397 (NPENRV) is hydrophilic. A helical membrane pass occupies residues 398–418 (LGLVSYAWAGFGAAFGPVVLF). At 419–427 (SVMWSRMTR) the chain is on the cytoplasmic side. Hydrophilic regions lie at residues 424–430 (RMTRNGA) and 446–448 (QFG). A run of 2 helical transmembrane segments spans residues 428 to 448 (NGAL…KQFG) and 449 to 469 (WLGL…IVVF). Residues 470–502 (SLLGKAPSAAMQKRFAEADAHYHSAPPSRLQES) are Cytoplasmic-facing. The hydrophilic stretch occupies residues 476 to 502 (PSAAMQKRFAEADAHYHSAPPSRLQES).

Belongs to the sodium:solute symporter (SSF) (TC 2.A.21) family. As to quaternary structure, has been isolated from inner membrane preparations as a homodimer.

The protein resides in the cell inner membrane. The enzyme catalyses L-proline(in) + Na(+)(in) = L-proline(out) + Na(+)(out). Its activity is regulated as follows. Activity is stimulated by phosphatidylethanolamine and phosphatidylglycerol, but not by phosphatidylcholine and cardiolipin. Proline uptake is inhibited by the sulfhydryl reagent N-ethylmaleimide (NEM). Proline, in the presence of Na(+) or Li(+), protects the carrier functions from NEM-inactivation. Its function is as follows. Catalyzes the sodium-dependent uptake of extracellular L-proline. This protein is also capable of using lithium as the transport cation. Also catalyzes the uptake of propionate. The protein is Sodium/proline symporter (putP) of Escherichia coli (strain K12).